Reading from the N-terminus, the 310-residue chain is 300 kDa antigen AG231 (310 aa).

A 4 X 6 AA tandem repeats of V-V-T-G-S-C region spans residues 1 to 23 (VTGSCVVTGSCVVTDSCVVTGSC). The segment at 29–106 (VTTQESVTTQ…TQEPVTVEEH (78 aa)) is 13 X 6 AA tandem repeats of V-V-[TI]-[QE]-E-[PH]. Residues 53–101 (VTIEEPVTTQEPVTIEEPVTTQEPVTTQEPVTTQEPVTTQEPVTTQEPV) are compositionally biased toward low complexity. Residues 53–310 (VTIEEPVTTQ…FGRGNKNDKK (258 aa)) form a disordered region. Basic and acidic residues-rich tracts occupy residues 103–114 (VEEHIDEKKGSE) and 147–160 (NKND…KKPS). A 45 AA repeat 1 repeat occupies 107–152 (IDEKKGSEGDNISLSSLSEETEEKSHTKKKKSSWLKFGRGNKNDKK). Over residues 176–190 (TDSQISVNAQDSVTI) the composition is skewed to polar residues. The tract at residues 188-265 (VTIQEPTATQ…TQEPSTTQEH (78 aa)) is 13 X 6 AA approximate tandem repeats. Over residues 191–235 (QEPTATQEPPTTQELTATQEPTTTQETVTEQEPTTTQETVTAQEP) the composition is skewed to low complexity. The span at 236–263 (ITTQEPVTAQEPVTTQELIATQEPSTTQ) shows a compositional bias: polar residues. The segment covering 264-273 (EHADEKKASE) has biased composition (basic and acidic residues). One copy of the 45 AA repeat 2 repeat lies at 266–310 (ADEKKASEGDNISLSRLSEETEEKSHTKKKSSWLKFGRGNKNDKK).

This Plasmodium falciparum (isolate FC27 / Papua New Guinea) protein is 300 kDa antigen AG231 (FIRA).